The primary structure comprises 248 residues: 2,3-bisphosphoglycerate-dependent phosphoglycerate mutase (248 aa).

Substrate contacts are provided by residues 8 to 15, 21 to 22, Arg60, 87 to 90, Lys98, 114 to 115, and 183 to 184; these read RHGESAWN, TG, EKHY, RR, and GN. His9 (tele-phosphohistidine intermediate) is an active-site residue. Glu87 serves as the catalytic Proton donor/acceptor.

This sequence belongs to the phosphoglycerate mutase family. BPG-dependent PGAM subfamily.

It catalyses the reaction (2R)-2-phosphoglycerate = (2R)-3-phosphoglycerate. The protein operates within carbohydrate degradation; glycolysis; pyruvate from D-glyceraldehyde 3-phosphate: step 3/5. Its function is as follows. Catalyzes the interconversion of 2-phosphoglycerate and 3-phosphoglycerate. This is 2,3-bisphosphoglycerate-dependent phosphoglycerate mutase from Bacteroides fragilis (strain ATCC 25285 / DSM 2151 / CCUG 4856 / JCM 11019 / LMG 10263 / NCTC 9343 / Onslow / VPI 2553 / EN-2).